The chain runs to 171 residues: Protein-export protein SecB (171 aa).

It belongs to the SecB family. As to quaternary structure, homotetramer, a dimer of dimers. One homotetramer interacts with 1 SecA dimer.

It is found in the cytoplasm. Its function is as follows. One of the proteins required for the normal export of preproteins out of the cell cytoplasm. It is a molecular chaperone that binds to a subset of precursor proteins, maintaining them in a translocation-competent state. It also specifically binds to its receptor SecA. This chain is Protein-export protein SecB, found in Gluconacetobacter diazotrophicus (strain ATCC 49037 / DSM 5601 / CCUG 37298 / CIP 103539 / LMG 7603 / PAl5).